A 224-amino-acid polypeptide reads, in one-letter code: Adenylate kinase (224 aa).

10–15 (GSGKST) contacts ATP. Residues 30–59 (SSGDLIRREIERKSSLGREMEAYLSRGDLI) form an NMP region. AMP is bound by residues S31, R36, 57-59 (DLI), 83-86 (GYPR), and Q90. The interval 124 to 161 (GRRICPNCGAVYHVKYNPPKVPGICDVCGSELIQRADD) is LID. R125 is an ATP binding site. Zn(2+)-binding residues include C128 and C131. 134–135 (VY) serves as a coordination point for ATP. Zn(2+) is bound by residues C148 and C151. Residues R158 and R169 each contribute to the AMP site. Residue G197 coordinates ATP.

The protein belongs to the adenylate kinase family. As to quaternary structure, monomer.

It localises to the cytoplasm. The enzyme catalyses AMP + ATP = 2 ADP. The protein operates within purine metabolism; AMP biosynthesis via salvage pathway; AMP from ADP: step 1/1. Functionally, catalyzes the reversible transfer of the terminal phosphate group between ATP and AMP. Plays an important role in cellular energy homeostasis and in adenine nucleotide metabolism. In Thermococcus kodakarensis (strain ATCC BAA-918 / JCM 12380 / KOD1) (Pyrococcus kodakaraensis (strain KOD1)), this protein is Adenylate kinase.